The primary structure comprises 271 residues: MEDTGSIKQEAQSHPPGIFEIPGEPAVVINGVPDEPQTDCMIAKDEPISSGTVGSGEWLEGREVRKFFLGRYYSGTVTKFDKQSGWYRVEYEDGDSEDLDWSELEEVLLPLDTKNSNTNAQSEYGEAGQRVNVKAPYPGHKPEKLVTTTVKAPYPGHKPEKLIPLVDDILTVGPEITSEEVGRAQGIFASADQNNFGLLMAFNFVFTKGEFSGSTVSMYGRNPIFSKVREMPIIGGTGAFRFGRGYAQAKTFTFNTTSGNAVVKYNVYIWH.

Over residues 1–12 (MEDTGSIKQEAQ) the composition is skewed to polar residues. A disordered region spans residues 1–22 (MEDTGSIKQEAQSHPPGIFEIP). Residue Asn-255 is glycosylated (N-linked (GlcNAc...) asparagine).

This sequence belongs to the plant dirigent protein family. As to quaternary structure, homodimer.

It localises to the secreted. Its subcellular location is the extracellular space. The protein resides in the apoplast. In terms of biological role, dirigent proteins impart stereoselectivity on the phenoxy radical-coupling reaction, yielding optically active lignans from two molecules of coniferyl alcohol in the biosynthesis of lignans, flavonolignans, and alkaloids and thus plays a central role in plant secondary metabolism. In Arabidopsis thaliana (Mouse-ear cress), this protein is Dirigent protein 17 (DIR17).